The chain runs to 821 residues: Leucine--tRNA ligase (821 aa).

A 'HIGH' region motif is present at residues 44 to 54; sequence PYPSGRIHMGH. Positions 589 to 593 match the 'KMSKS' region motif; sequence KMSKS. K592 is a binding site for ATP.

The protein belongs to the class-I aminoacyl-tRNA synthetase family.

It localises to the cytoplasm. The catalysed reaction is tRNA(Leu) + L-leucine + ATP = L-leucyl-tRNA(Leu) + AMP + diphosphate. The chain is Leucine--tRNA ligase from Campylobacter curvus (strain 525.92).